The chain runs to 482 residues: UDP-N-acetylmuramoyl-L-alanyl-D-glutamate--2,6-diaminopimelate ligase (482 aa).

UDP-N-acetyl-alpha-D-muramoyl-L-alanyl-D-glutamate is bound at residue Ser-24. Residue 105–111 coordinates ATP; it reads GTNGKTT. Residues 147–148, Ser-174, Gln-180, and Arg-182 contribute to the UDP-N-acetyl-alpha-D-muramoyl-L-alanyl-D-glutamate site; that span reads TT. The residue at position 214 (Lys-214) is an N6-carboxylysine. Meso-2,6-diaminopimelate is bound by residues Arg-378, 402 to 405, Gly-453, and Glu-457; that span reads DNPR. The short motif at 402–405 is the Meso-diaminopimelate recognition motif element; that stretch reads DNPR.

This sequence belongs to the MurCDEF family. MurE subfamily. Requires Mg(2+) as cofactor. Carboxylation is probably crucial for Mg(2+) binding and, consequently, for the gamma-phosphate positioning of ATP.

It localises to the cytoplasm. The catalysed reaction is UDP-N-acetyl-alpha-D-muramoyl-L-alanyl-D-glutamate + meso-2,6-diaminopimelate + ATP = UDP-N-acetyl-alpha-D-muramoyl-L-alanyl-gamma-D-glutamyl-meso-2,6-diaminopimelate + ADP + phosphate + H(+). It functions in the pathway cell wall biogenesis; peptidoglycan biosynthesis. Functionally, catalyzes the addition of meso-diaminopimelic acid to the nucleotide precursor UDP-N-acetylmuramoyl-L-alanyl-D-glutamate (UMAG) in the biosynthesis of bacterial cell-wall peptidoglycan. In Lawsonia intracellularis (strain PHE/MN1-00), this protein is UDP-N-acetylmuramoyl-L-alanyl-D-glutamate--2,6-diaminopimelate ligase.